Here is a 1456-residue protein sequence, read N- to C-terminus: Macrophage mannose receptor 1 (1456 aa).

The N-terminal stretch at 1–19 is a signal peptide; the sequence is MRLLLLLAFISVIPVSVQL. Residues 20 to 1388 lie on the Extracellular side of the membrane; the sequence is LDARQFLIYN…DPQPKGSSKA (1369 aa). In terms of domain architecture, Ricin B-type lectin spans 22-142; it reads ARQFLIYNED…SGLWSRWKVY (121 aa). Intrachain disulfides connect Cys35–Cys49, Cys74–Cys91, Cys102–Cys149, Cys168–Cys194, Cys182–Cys209, Cys247–Cys340, and Cys316–Cys332. An N-linked (GlcNAc...) asparagine glycan is attached at Asn104. The 49-residue stretch at 163 to 211 folds into the Fibronectin type-II domain; it reads ANGAVCAFPFKFENKWYADCTSAGRSDGWLWCGTTTDYDKDKLFGFCPL. Residues 225 to 341 form the C-type lectin 1 domain; that stretch reads LTGILYQINS…CVQKLGYICK (117 aa). A glycan (N-linked (GlcNAc...) asparagine) is linked at Asn344. 4 consecutive C-type lectin domains span residues 369-487, 511-626, 655-778, and 807-923; these read YAGH…YICK, HGFY…FVCK, KTSM…WICQ, and YKDY…FICQ. 2 disulfides stabilise this stretch: Cys391-Cys486 and Cys463-Cys478. A glycan (N-linked (GlcNAc...) asparagine) is linked at Asn529. Intrachain disulfides connect Cys532/Cys625, Cys600/Cys617, Cys680/Cys777, Cys753/Cys769, Cys828/Cys922, and Cys899/Cys914. 2 N-linked (GlcNAc...) asparagine glycosylation sites follow: Asn926 and Asn930. C-type lectin domains are found at residues 951–1079, 1101–1212, and 1240–1355; these read YKNK…YICQ, YGKS…FLCK, and FYGH…FICK. Intrachain disulfides connect Cys976–Cys1078, Cys1051–Cys1070, Cys1122–Cys1211, Cys1189–Cys1203, Cys1262–Cys1354, and Cys1331–Cys1346. N-linked (GlcNAc...) asparagine glycosylation is present at Asn1159. Asn1204 carries N-linked (GlcNAc...) asparagine glycosylation. The helical transmembrane segment at 1389–1409 threads the bilayer; that stretch reads AGVVTVVLLIVIGAGVAAYFF. The Cytoplasmic segment spans residues 1410–1456; sequence YKKRHALHIPQEATFENTLYFNSNLSPGTSDTKDLMGNIEQNEHAII.

In terms of tissue distribution, detected in macrophages.

The protein resides in the endosome membrane. Its subcellular location is the cell membrane. Its function is as follows. Mediates the endocytosis of glycoproteins by macrophages. Binds both sulfated and non-sulfated polysaccharide chains. Acts as phagocytic receptor for bacteria, fungi and other pathogens. This Mus musculus (Mouse) protein is Macrophage mannose receptor 1 (Mrc1).